Here is a 438-residue protein sequence, read N- to C-terminus: uncharacterized protein (438 aa).

His-59 contributes to the Zn(2+) binding site. Glu-62 acts as the Proton acceptor in catalysis. Positions 63 and 139 each coordinate Zn(2+).

The protein belongs to the peptidase M16 family. It depends on Zn(2+) as a cofactor.

This is an uncharacterized protein from Mycobacterium tuberculosis (strain CDC 1551 / Oshkosh).